The following is a 460-amino-acid chain: Amino acid transporter AVT6A (460 aa).

The next 11 membrane-spanning stretches (helical) occupy residues 45 to 65 (FSGAVFNLATTIIGAGIMALP), 66 to 86 (ATMKILGLGLGITMIVVMAFL), 120 to 140 (ILLQVAVLVNNIGVLIVYMII), 172 to 192 (AAILLITTLGVFAPLACFKRI), 199 to 219 (SALSVALAVVFLIITAGISIM), 238 to 258 (LTSFWNLFTVVPVLVTAFICH), 281 to 301 (ALMLCSSVYIMTSIFGFLLFG), 336 to 356 (LMLVFPIVFYPLRINIDGLLF), 371 to 391 (CLTAGLISVIFLGANFIPSIW), 394 to 414 (FQFTGATAAVCLGFIFPASII), and 427 to 447 (TTLAIFMIVLAVLSNAIAIYS).

Belongs to the amino acid/polyamine transporter 2 family. Amino acid/auxin permease (AAAP) (TC 2.A.18.6) subfamily.

It localises to the membrane. In Arabidopsis thaliana (Mouse-ear cress), this protein is Amino acid transporter AVT6A.